Consider the following 691-residue polypeptide: 1-butanol dehydrogenase (cytochrome c) (691 aa).

Positions 1–38 are cleaved as a signal peptide; that stretch reads MLTTTFARKREESVPLRKGIQRALLGLSCLVLSTTSFA. Residue Glu84 coordinates pyrroloquinoline quinone. Residues Cys130 and Cys131 are joined by a disulfide bond. Pyrroloquinoline quinone-binding positions include Arg136, Thr181, and 197 to 198; that span reads GA. Positions 199 and 322 each coordinate Ca(2+). Asp322 acts as the Proton acceptor in catalysis. Residues Lys349, 408-409, and Val558 each bind pyrroloquinoline quinone; that span reads NW. The 80-residue stretch at 605 to 684 folds into the Cytochrome c domain; the sequence is DDVAEGTGLY…KIKAFILGTA (80 aa). 4 residues coordinate heme c: Cys618, Cys621, His622, and Met661.

It belongs to the bacterial PQQ dehydrogenase family. In terms of assembly, monomer. The cofactor is pyrroloquinoline quinone. It depends on Ca(2+) as a cofactor. Heme c serves as cofactor.

Its subcellular location is the periplasm. It carries out the reaction butan-1-ol + 2 Fe(III)-[cytochrome c] = butanal + 2 Fe(II)-[cytochrome c] + 2 H(+). Dehydrogenase activity is increased by ammonium ions. Involved in the metabolism of butane. Could be important in the detoxification of 1-butanol. Catalyzes the oxidation of 1-butanol to butyraldehyde. Also able to use 1-propanol, 2-pentanol, propionaldehyde and butyraldehyde as substrates. The sequence is that of 1-butanol dehydrogenase (cytochrome c) from Thauera butanivorans (strain ATCC 43655 / DSM 2080 / JCM 20651 / CCUG 51053 / NBRC 103042 / IAM 12574 / Bu B1211) (Pseudomonas butanovora).